Consider the following 236-residue polypeptide: Small ribosomal subunit protein eS6 (236 aa).

This sequence belongs to the eukaryotic ribosomal protein eS6 family. In terms of assembly, component of the small ribosomal subunit. Mature ribosomes consist of a small (40S) and a large (60S) subunit. The 40S subunit contains about 32 different proteins and 1 molecule of RNA (18S). The 60S subunit contains 45 different proteins and 3 molecules of RNA (25S, 5.8S and 5S).

The protein resides in the cytoplasm. Functionally, component of the ribosome, a large ribonucleoprotein complex responsible for the synthesis of proteins in the cell. The small ribosomal subunit (SSU) binds messenger RNAs (mRNAs) and translates the encoded message by selecting cognate aminoacyl-transfer RNA (tRNA) molecules. The large subunit (LSU) contains the ribosomal catalytic site termed the peptidyl transferase center (PTC), which catalyzes the formation of peptide bonds, thereby polymerizing the amino acids delivered by tRNAs into a polypeptide chain. The nascent polypeptides leave the ribosome through a tunnel in the LSU and interact with protein factors that function in enzymatic processing, targeting, and the membrane insertion of nascent chains at the exit of the ribosomal tunnel. RPS6A is involved in nucleolar processing of pre-18S ribosomal RNA and ribosome assembly. This chain is Small ribosomal subunit protein eS6 (RPS6A), found in Candida albicans (strain SC5314 / ATCC MYA-2876) (Yeast).